The primary structure comprises 614 residues: Kelch-like protein 40 (614 aa).

One can recognise a BTB domain in the interval 33-100 (IDCVLKIQGK…IYTSEIEITE (68 aa)). Residues 135–237 (CLAIFRLGLL…PQDYIKNKVE (103 aa)) form the BACK domain. Kelch repeat units follow at residues 353–405 (QLFV…ESDN), 406–455 (SIYL…SHDN), 456–503 (LVYV…VHKG), 505–550 (ILIA…SMNG), and 552–606 (LYAI…AARL).

The protein belongs to the KLHL40 family. Component of the BCR(KLHL40) E3 ubiquitin ligase complex.

The protein localises to the cytoplasm. It is found in the myofibril. The protein resides in the sarcomere. It localises to the a band. Its subcellular location is the i band. Substrate-specific adapter of a BCR (BTB-CUL3-RBX1) E3 ubiquitin ligase complex that acts as a key regulator of skeletal muscle development. The polypeptide is Kelch-like protein 40 (klhl40) (Xenopus tropicalis (Western clawed frog)).